A 329-amino-acid chain; its full sequence is Alpha/beta hydrolase domain-containing protein 17C (329 aa).

The disordered stretch occupies residues Ala46–Gly85. A compositionally biased stretch (low complexity) spans Gly51–Glu79. Catalysis depends on charge relay system residues Ser211, Asp276, and His305.

The protein belongs to the AB hydrolase superfamily. ABHD17 family. Post-translationally, palmitoylated on cysteine residues located in a cysteine cluster at the N-terminus which promotes membrane localization. Palmitoylation is required for post-synaptic localization and for depalmitoylating activity towards DLG4/PSD95.

It localises to the recycling endosome membrane. It is found in the cell projection. Its subcellular location is the dendritic spine. The protein localises to the postsynaptic density membrane. The catalysed reaction is S-hexadecanoyl-L-cysteinyl-[protein] + H2O = L-cysteinyl-[protein] + hexadecanoate + H(+). Functionally, hydrolyzes fatty acids from S-acylated cysteine residues in proteins. Has depalmitoylating activity towards NRAS and DLG4/PSD95. This chain is Alpha/beta hydrolase domain-containing protein 17C, found in Bos taurus (Bovine).